The sequence spans 80 residues: Defensin-like protein 17 (80 aa).

The signal sequence occupies residues 1–29 (MAKSATIITFLFAALVLFAAFEAPTMVEA). Position 30 is a pyrrolidone carboxylic acid (glutamine 30). 4 disulfide bridges follow: cysteine 33–cysteine 80, cysteine 44–cysteine 65, cysteine 50–cysteine 74, and cysteine 54–cysteine 76.

This sequence belongs to the DEFL family.

Its subcellular location is the secreted. Its function is as follows. Confers broad-spectrum resistance to pathogens. The chain is Defensin-like protein 17 (PDF1.2C) from Arabidopsis thaliana (Mouse-ear cress).